Reading from the N-terminus, the 351-residue chain is Paired box protein 2 homolog (351 aa).

The segment at residues 91–217 (SHTGVNQLGG…SSINRIVRNK (127 aa)) is a DNA-binding region (paired). The PAI subdomain stretch occupies residues 94–150 (GVNQLGGVFVNGRPLPDTIRAQIVEMSQHGTRPCDISRQLKVSHGCVSKILGRYYST). The interval 169–217 (RVVECIAGYKRANPTMFAWEIRQKLIEDQICGEENVPSVSSINRIVRNK) is RED subdomain. The segment covering 226 to 246 (PTSVTPSVARPSSATSQNQRS) has biased composition (polar residues). Residues 226–258 (PTSVTPSVARPSSATSQNQRSPPRGVQQHMQQS) form a disordered region.

The protein resides in the nucleus. The protein localises to the chromosome. Functionally, transcription factor. Involved in negatively modulating apoptosis in germline and somatic cells, acting in partial redundancy with transcription factor egl-38/PAX5, probably by directly regulating transcription of apoptosis regulator ced-9. May bind to the DNA sequence motif 5'-GTAACG-3' in regulatory elements. The polypeptide is Paired box protein 2 homolog (Caenorhabditis elegans).